A 293-amino-acid chain; its full sequence is Xylanase inhibitor protein XIP (293 aa).

Positions 1–21 (MALRRLAALLSLAVLLSAGLA) are cleaved as a signal peptide. The GH18 domain maps to 31-293 (GDTVIIWGRN…DKKTGFTAHL (263 aa)). Intrachain disulfides connect Cys50–Cys92 and Cys189–Cys218.

It belongs to the glycosyl hydrolase 18 family. Xylanase inhibitor subfamily. As to expression, expressed in mature grain.

It localises to the secreted. Functionally, fungal xylanase inhibitor. Possesses competitive inhibiting activity against several fungal endo-1,4-beta-D-xylanases belonging to glycoside hydrolase family 10 (GH10) and family 11 (GH11). May function in plant defense against secreted fungal pathogen xylanases. Is similar to class III chitinases, but does not exhibit chitinase activity. The sequence is that of Xylanase inhibitor protein XIP from Oryza sativa subsp. japonica (Rice).